The following is a 490-amino-acid chain: V-type proton ATPase subunit B (490 aa).

Position 380 (arginine 380) interacts with ATP.

This sequence belongs to the ATPase alpha/beta chains family. In terms of assembly, V-ATPase is a heteromultimeric enzyme made up of two complexes: the ATP-hydrolytic V1 complex and the proton translocation V0 complex. The V1 complex consists of three catalytic AB heterodimers that form a heterohexamer, three peripheral stalks each consisting of EG heterodimers, one central rotor including subunits D and F, and the regulatory subunits C and H. The proton translocation complex V0 consists of the proton transport subunit a, a ring of proteolipid subunits c9c'', rotary subunit d, subunits e and f, and the accessory subunits VhaAC45 and ATP6AP2. Expressed in Malpighian tubules, rectum, antennal palps and oviduct.

Functionally, non-catalytic subunit of the V1 complex of vacuolar(H+)-ATPase (V-ATPase), a multisubunit enzyme composed of a peripheral complex (V1) that hydrolyzes ATP and a membrane integral complex (V0) that translocates protons. V-ATPase is responsible for acidifying and maintaining the pH of intracellular compartments and in some cell types, is targeted to the plasma membrane, where it is responsible for acidifying the extracellular environment. Essential for the proper assembly and activity of V-ATPase. The sequence is that of V-type proton ATPase subunit B (Vha55) from Drosophila melanogaster (Fruit fly).